We begin with the raw amino-acid sequence, 91 residues long: Small ribosomal subunit protein uS19 (91 aa).

This sequence belongs to the universal ribosomal protein uS19 family.

Functionally, protein S19 forms a complex with S13 that binds strongly to the 16S ribosomal RNA. The polypeptide is Small ribosomal subunit protein uS19 (Syntrophotalea carbinolica (strain DSM 2380 / NBRC 103641 / GraBd1) (Pelobacter carbinolicus)).